Consider the following 294-residue polypeptide: Probable 2-(5''-triphosphoribosyl)-3'-dephosphocoenzyme-A synthase (294 aa).

This sequence belongs to the CitG/MdcB family.

The enzyme catalyses 3'-dephospho-CoA + ATP = 2'-(5''-triphospho-alpha-D-ribosyl)-3'-dephospho-CoA + adenine. This chain is Probable 2-(5''-triphosphoribosyl)-3'-dephosphocoenzyme-A synthase, found in Streptococcus pyogenes serotype M28 (strain MGAS6180).